We begin with the raw amino-acid sequence, 430 residues long: Mucorpepsin (430 aa).

Residues 1–22 (MLFSQITSAILLTAASLSLTTA) form the signal peptide. A propeptide spans 23–69 (RPVSKQSESKDKLLALPLTSVSRKFSQTKFGQQQLAEKLAGLKPFSE) (activation peptide). One can recognise a Peptidase A1 domain in the interval 89-421 (YAIPVSIGTP…DFGNNRIGFA (333 aa)). Residue D107 is part of the active site. A disulfide bridge connects residues C120 and C126. N-linked (GlcNAc...) asparagine glycans are attached at residues N148 and N257. Residue D306 is part of the active site. A disulfide bridge links C341 with C385.

Belongs to the peptidase A1 family.

It carries out the reaction Hydrolysis of proteins, favoring hydrophobic residues at P1 and P1'. Clots milk. Does not accept Lys at P1, and hence does not activate trypsinogen.. Its function is as follows. This enzyme, capable of clotting milk is frequently used for cheese production. This Rhizomucor miehei protein is Mucorpepsin.